The primary structure comprises 285 residues: Protein unc-1 (285 aa).

Helical transmembrane passes span 27 to 47 and 69 to 89; these read IGTIFGYALQALSWILIIVTF and IGRLVFGGARGPGMIFIIPCI.

It belongs to the band 7/mec-2 family.

The protein localises to the cell membrane. The protein resides in the cell junction. Its subcellular location is the gap junction. This is Protein unc-1 (unc-1) from Caenorhabditis elegans.